The primary structure comprises 256 residues: Pyridoxine 5'-phosphate synthase (256 aa).

Asparagine 10 is a 3-amino-2-oxopropyl phosphate binding site. 12-13 is a binding site for 1-deoxy-D-xylulose 5-phosphate; it reads DH. A 3-amino-2-oxopropyl phosphate-binding site is contributed by arginine 21. Catalysis depends on histidine 46, which acts as the Proton acceptor. 1-deoxy-D-xylulose 5-phosphate is bound by residues arginine 48 and histidine 53. Glutamate 73 acts as the Proton acceptor in catalysis. Residue threonine 103 coordinates 1-deoxy-D-xylulose 5-phosphate. Histidine 193 serves as the catalytic Proton donor. 3-amino-2-oxopropyl phosphate contacts are provided by residues glycine 194 and 215 to 216; that span reads GH.

This sequence belongs to the PNP synthase family. Homooctamer; tetramer of dimers.

The protein localises to the cytoplasm. The catalysed reaction is 3-amino-2-oxopropyl phosphate + 1-deoxy-D-xylulose 5-phosphate = pyridoxine 5'-phosphate + phosphate + 2 H2O + H(+). The protein operates within cofactor biosynthesis; pyridoxine 5'-phosphate biosynthesis; pyridoxine 5'-phosphate from D-erythrose 4-phosphate: step 5/5. Catalyzes the complicated ring closure reaction between the two acyclic compounds 1-deoxy-D-xylulose-5-phosphate (DXP) and 3-amino-2-oxopropyl phosphate (1-amino-acetone-3-phosphate or AAP) to form pyridoxine 5'-phosphate (PNP) and inorganic phosphate. The polypeptide is Pyridoxine 5'-phosphate synthase (Zymomonas mobilis subsp. mobilis (strain ATCC 31821 / ZM4 / CP4)).